The following is a 251-amino-acid chain: Aspartate/glutamate leucyltransferase (251 aa).

Belongs to the R-transferase family. Bpt subfamily.

The protein localises to the cytoplasm. It catalyses the reaction N-terminal L-glutamyl-[protein] + L-leucyl-tRNA(Leu) = N-terminal L-leucyl-L-glutamyl-[protein] + tRNA(Leu) + H(+). The catalysed reaction is N-terminal L-aspartyl-[protein] + L-leucyl-tRNA(Leu) = N-terminal L-leucyl-L-aspartyl-[protein] + tRNA(Leu) + H(+). Functions in the N-end rule pathway of protein degradation where it conjugates Leu from its aminoacyl-tRNA to the N-termini of proteins containing an N-terminal aspartate or glutamate. In Stenotrophomonas maltophilia (strain K279a), this protein is Aspartate/glutamate leucyltransferase.